The primary structure comprises 400 residues: Elongation factor Tu (400 aa).

A tr-type G domain is found at 10 to 210 (KPHINVGTIG…ALDEYIPEPK (201 aa)). The tract at residues 19 to 26 (GHVDHGKT) is G1. 19–26 (GHVDHGKT) serves as a coordination point for GTP. Threonine 26 lines the Mg(2+) pocket. The interval 64–68 (GITIA) is G2. The interval 85 to 88 (DCPG) is G3. Residues 85–89 (DCPGH) and 140–143 (NKAD) contribute to the GTP site. The segment at 140-143 (NKAD) is G4. Residues 178-180 (SAL) are G5.

The protein belongs to the TRAFAC class translation factor GTPase superfamily. Classic translation factor GTPase family. EF-Tu/EF-1A subfamily. In terms of assembly, monomer.

Its subcellular location is the cytoplasm. It carries out the reaction GTP + H2O = GDP + phosphate + H(+). Functionally, GTP hydrolase that promotes the GTP-dependent binding of aminoacyl-tRNA to the A-site of ribosomes during protein biosynthesis. This Rubrobacter xylanophilus (strain DSM 9941 / JCM 11954 / NBRC 16129 / PRD-1) protein is Elongation factor Tu.